The following is a 203-amino-acid chain: SOSS complex subunit B1 (203 aa).

A DNA-binding region (OB) is located at residues 22-92; that stretch reads IVLETGRVTK…TLYTGRGGDL (71 aa). Residues 111–203 are disordered; that stretch reads PNPEYIAQQS…GKEPRRTGKR (93 aa). Polar residues predominate over residues 117–128; it reads AQQSQNKQAQAE. Over residues 129–140 the composition is skewed to low complexity; the sequence is SGTGTNSHNSSS. Positions 149–182 are enriched in polar residues; sequence ENGNGSNSSGPPTHQSTAPTHSTSGRITRSQPNH.

Belongs to the SOSS-B family. SOSS-B1 subfamily. As to quaternary structure, component of the SOSS complex, composed of soss-b (soss-b1/nabp2 or soss-b2/nabp1), soss-a/ints3 and soss-c/inip. SOSS complexes containing soss-b1/nabp2 are more abundant than complexes containing soss-b2/nabp1.

It is found in the nucleus. Component of the SOSS complex, a multiprotein complex that functions downstream of the MRN complex to promote DNA repair and G2/M checkpoint. In the SOSS complex, acts as a sensor of single-stranded DNA that binds to single-stranded DNA. The SOSS complex associates with DNA lesions and influences diverse endpoints in the cellular DNA damage response including cell-cycle checkpoint activation, recombinational repair and maintenance of genomic stability. Required for efficient homologous recombination-dependent repair of double-strand breaks (DSBs). The polypeptide is SOSS complex subunit B1 (nabp2) (Xenopus tropicalis (Western clawed frog)).